Consider the following 209-residue polypeptide: Uracil phosphoribosyltransferase (209 aa).

5-phospho-alpha-D-ribose 1-diphosphate contacts are provided by residues R79, R104, and D131 to S139. Uracil contacts are provided by residues I194 and G199–A201. Residue D200 coordinates 5-phospho-alpha-D-ribose 1-diphosphate.

The protein belongs to the UPRTase family. The cofactor is Mg(2+).

The enzyme catalyses UMP + diphosphate = 5-phospho-alpha-D-ribose 1-diphosphate + uracil. It participates in pyrimidine metabolism; UMP biosynthesis via salvage pathway; UMP from uracil: step 1/1. With respect to regulation, allosterically activated by GTP. Its function is as follows. Catalyzes the conversion of uracil and 5-phospho-alpha-D-ribose 1-diphosphate (PRPP) to UMP and diphosphate. The chain is Uracil phosphoribosyltransferase from Thermotoga maritima (strain ATCC 43589 / DSM 3109 / JCM 10099 / NBRC 100826 / MSB8).